The sequence spans 252 residues: Phosphate import ATP-binding protein PstB 2 (252 aa).

The ABC transporter domain occupies 6–247; sequence ISINDLSVYF…PQHKETEDYI (242 aa). ATP is bound at residue 38–45; that stretch reads GPSGSGKS.

This sequence belongs to the ABC transporter superfamily. Phosphate importer (TC 3.A.1.7) family. The complex is composed of two ATP-binding proteins (PstB), two transmembrane proteins (PstC and PstA) and a solute-binding protein (PstS).

The protein localises to the cell membrane. The enzyme catalyses phosphate(out) + ATP + H2O = ADP + 2 phosphate(in) + H(+). Its function is as follows. Part of the ABC transporter complex PstSACB involved in phosphate import. Responsible for energy coupling to the transport system. The polypeptide is Phosphate import ATP-binding protein PstB 2 (Streptococcus thermophilus (strain CNRZ 1066)).